A 37-amino-acid chain; its full sequence is Potassium channel toxin alpha-KTx 15.1 (37 aa).

Q1 carries the pyrrolidone carboxylic acid modification. 3 disulfide bridges follow: C8/C28, C13/C33, and C17/C35.

Belongs to the short scorpion toxin superfamily. Potassium channel inhibitor family. Alpha-KTx 15 subfamily. As to expression, expressed by the venom gland.

The protein localises to the secreted. In terms of biological role, blocker of voltage-gated potassium channels (600 nM of the toxin induces a block of 25% of hERG currents). May also inhibit Kv4/KCND when coexpressed with DPP6 or DPP10. In adult rat brain, it blocks the transient potassium channels in cerebellum granular cells. Blocks potassium channels by a simple 'plugging mechanism', in which a single toxin molecule finds a specific receptor site in the external vestibule of the potassium channel and thereby occludes the outer entry to the potassium conducting pore. This chain is Potassium channel toxin alpha-KTx 15.1, found in Androctonus australis (Sahara scorpion).